The sequence spans 35 residues: Photosystem II reaction center protein T (35 aa).

The helical transmembrane segment at 3–23 (ALVYTFLLVSTLGIIFFAIFF) threads the bilayer.

The protein belongs to the PsbT family. As to quaternary structure, PSII is composed of 1 copy each of membrane proteins PsbA, PsbB, PsbC, PsbD, PsbE, PsbF, PsbH, PsbI, PsbJ, PsbK, PsbL, PsbM, PsbT, PsbY, PsbZ, Psb30/Ycf12, at least 3 peripheral proteins of the oxygen-evolving complex and a large number of cofactors. It forms dimeric complexes.

Its subcellular location is the plastid. The protein localises to the chloroplast thylakoid membrane. Functionally, found at the monomer-monomer interface of the photosystem II (PS II) dimer, plays a role in assembly and dimerization of PSII. PSII is a light-driven water plastoquinone oxidoreductase, using light energy to abstract electrons from H(2)O, generating a proton gradient subsequently used for ATP formation. The sequence is that of Photosystem II reaction center protein T from Schisandra chinensis (Chinese magnolia vine).